A 214-amino-acid chain; its full sequence is MMVDLFSSLDGMTSLWSWLTPMFLSVFMIWNKTWSMDQNNIIKYLAASNWNNSTYNLTKSLLTIMMVLIIFNNLLGMAPFTYGITTSLWVNMTLALLLWGLILLSGYIKSPKKSLAHLAPSGAPLLLLPFLILIESISIMIRPLTLTVRLVANMSAGHIILALMASVLSSNLSNTSLSLSYLIMVGYYLFEFFVCFIQAYIFTLLLSLYMNEHP.

A run of 6 helical transmembrane segments spans residues 9–29 (LDGM…VFMI), 64–84 (IMMV…TYGI), 88–108 (LWVN…SGYI), 121–141 (SGAP…SIMI), 150–170 (LVAN…VLSS), and 182–202 (LIMV…AYIF).

Belongs to the ATPase A chain family. In terms of assembly, F-type ATPases have 2 components, CF(1) - the catalytic core - and CF(0) - the membrane proton channel. CF(1) has five subunits: alpha(3), beta(3), gamma(1), delta(1), epsilon(1). CF(0) has three main subunits: a, b and c.

Its subcellular location is the mitochondrion inner membrane. In terms of biological role, mitochondrial membrane ATP synthase (F(1)F(0) ATP synthase or Complex V) produces ATP from ADP in the presence of a proton gradient across the membrane which is generated by electron transport complexes of the respiratory chain. F-type ATPases consist of two structural domains, F(1) - containing the extramembraneous catalytic core and F(0) - containing the membrane proton channel, linked together by a central stalk and a peripheral stalk. During catalysis, ATP synthesis in the catalytic domain of F(1) is coupled via a rotary mechanism of the central stalk subunits to proton translocation. Key component of the proton channel; it may play a direct role in the translocation of protons across the membrane. The protein is ATP synthase subunit a (ATP6) of Albinaria caerulea (Land snail).